Reading from the N-terminus, the 255-residue chain is 4-diphosphocytidyl-2-C-methyl-D-erythritol kinase (255 aa).

Lysine 9 is an active-site residue. 95-105 (PSQAGLGGGSS) contributes to the ATP binding site. Aspartate 137 is a catalytic residue.

Belongs to the GHMP kinase family. IspE subfamily.

The enzyme catalyses 4-CDP-2-C-methyl-D-erythritol + ATP = 4-CDP-2-C-methyl-D-erythritol 2-phosphate + ADP + H(+). Its pathway is isoprenoid biosynthesis; isopentenyl diphosphate biosynthesis via DXP pathway; isopentenyl diphosphate from 1-deoxy-D-xylulose 5-phosphate: step 3/6. In terms of biological role, catalyzes the phosphorylation of the position 2 hydroxy group of 4-diphosphocytidyl-2C-methyl-D-erythritol. The protein is 4-diphosphocytidyl-2-C-methyl-D-erythritol kinase of Sulfurovum sp. (strain NBC37-1).